The following is a 391-amino-acid chain: 3-ketoacyl-CoA thiolase (391 aa).

The Acyl-thioester intermediate role is filled by Cys-95. Residues His-347 and Cys-377 each act as proton acceptor in the active site.

The protein belongs to the thiolase-like superfamily. Thiolase family. Heterotetramer of two alpha chains (FadB) and two beta chains (FadA).

The protein resides in the cytoplasm. It carries out the reaction an acyl-CoA + acetyl-CoA = a 3-oxoacyl-CoA + CoA. It functions in the pathway lipid metabolism; fatty acid beta-oxidation. In terms of biological role, catalyzes the final step of fatty acid oxidation in which acetyl-CoA is released and the CoA ester of a fatty acid two carbons shorter is formed. This is 3-ketoacyl-CoA thiolase from Ectopseudomonas mendocina (strain ymp) (Pseudomonas mendocina).